The chain runs to 139 residues: D-ribose pyranase (139 aa).

The active-site Proton donor is histidine 20. Substrate-binding positions include aspartate 28, histidine 106, and 128–130; that span reads YAN.

This sequence belongs to the RbsD / FucU family. RbsD subfamily. As to quaternary structure, homodecamer.

The protein localises to the cytoplasm. It catalyses the reaction beta-D-ribopyranose = beta-D-ribofuranose. The protein operates within carbohydrate metabolism; D-ribose degradation; D-ribose 5-phosphate from beta-D-ribopyranose: step 1/2. In terms of biological role, catalyzes the interconversion of beta-pyran and beta-furan forms of D-ribose. The chain is D-ribose pyranase from Shewanella pealeana (strain ATCC 700345 / ANG-SQ1).